The primary structure comprises 234 residues: MRLVQLSRHSIAFPSPEGALREPNGLLALGGDLSPARLLMAYQRGIFPWFSPGDPILWWSPDPRAVLWPESLHISRSMKRFHKRSPYRVTMNYAFGQVIEGCASDREEGTWITRGVVKAYHRLHELGHAHSIEVWREDELVGGMYGVAQGTLFCGESMFSRMENASKTALLVFCDEFIRHGGKLIDCQVLNDHTASLGACEIPRRDYLNYLNQMRLGRLPNNFWVPRCLFSPQE.

The protein belongs to the L/F-transferase family.

It is found in the cytoplasm. It carries out the reaction N-terminal L-lysyl-[protein] + L-leucyl-tRNA(Leu) = N-terminal L-leucyl-L-lysyl-[protein] + tRNA(Leu) + H(+). The catalysed reaction is N-terminal L-arginyl-[protein] + L-leucyl-tRNA(Leu) = N-terminal L-leucyl-L-arginyl-[protein] + tRNA(Leu) + H(+). It catalyses the reaction L-phenylalanyl-tRNA(Phe) + an N-terminal L-alpha-aminoacyl-[protein] = an N-terminal L-phenylalanyl-L-alpha-aminoacyl-[protein] + tRNA(Phe). In terms of biological role, functions in the N-end rule pathway of protein degradation where it conjugates Leu, Phe and, less efficiently, Met from aminoacyl-tRNAs to the N-termini of proteins containing an N-terminal arginine or lysine. This chain is Leucyl/phenylalanyl-tRNA--protein transferase, found in Escherichia coli O81 (strain ED1a).